We begin with the raw amino-acid sequence, 160 residues long: 6,7-dimethyl-8-ribityllumazine synthase (160 aa).

Residues Trp27, 59-61, and 81-83 contribute to the 5-amino-6-(D-ribitylamino)uracil site; these read AIE and VVI. 86–87 serves as a coordination point for (2S)-2-hydroxy-3-oxobutyl phosphate; the sequence is ET. His89 serves as the catalytic Proton donor. Residue Asn114 coordinates 5-amino-6-(D-ribitylamino)uracil. Arg128 serves as a coordination point for (2S)-2-hydroxy-3-oxobutyl phosphate.

This sequence belongs to the DMRL synthase family. Homopentamer.

The catalysed reaction is (2S)-2-hydroxy-3-oxobutyl phosphate + 5-amino-6-(D-ribitylamino)uracil = 6,7-dimethyl-8-(1-D-ribityl)lumazine + phosphate + 2 H2O + H(+). Its pathway is cofactor biosynthesis; riboflavin biosynthesis; riboflavin from 2-hydroxy-3-oxobutyl phosphate and 5-amino-6-(D-ribitylamino)uracil: step 1/2. Functionally, catalyzes the formation of 6,7-dimethyl-8-ribityllumazine by condensation of 5-amino-6-(D-ribitylamino)uracil with 3,4-dihydroxy-2-butanone 4-phosphate. This is the penultimate step in the biosynthesis of riboflavin. The polypeptide is 6,7-dimethyl-8-ribityllumazine synthase (Mycobacterium ulcerans (strain Agy99)).